The chain runs to 818 residues: uncharacterized protein (818 aa).

Low complexity-rich tracts occupy residues 1–33, 44–68, and 97–150; these read MYNN…NYIS, NNFL…PQQQ, and NNSN…TKSN. Disordered stretches follow at residues 1 to 68, 92 to 150, 164 to 220, 284 to 306, and 415 to 445; these read MYNN…PQQQ, LNTG…TKSN, KLDN…KYHE, NMNG…NNSD, and NINK…NNNN. Acidic residues-rich tracts occupy residues 172–190 and 205–214; these read SEEE…EEKE and DNNSQDEDKE. The span at 284–302 shows a compositional bias: low complexity; that stretch reads NMNGSSDSSDSSNSSGHSR. A helical transmembrane segment spans residues 534 to 554; it reads IIAIIVIVWPLIANLTYKFIV. The tract at residues 779 to 808 is disordered; the sequence is ANNFMSDSNRSPSSSSSSSSSTSDSENGML. Positions 784 to 803 are enriched in low complexity; sequence SDSNRSPSSSSSSSSSTSDS.

The protein localises to the membrane. This is an uncharacterized protein from Dictyostelium discoideum (Social amoeba).